Here is a 339-residue protein sequence, read N- to C-terminus: tRNA N6-adenosine threonylcarbamoyltransferase (339 aa).

Fe cation contacts are provided by histidine 115 and histidine 119. Substrate contacts are provided by residues 136–140 (LISGG), aspartate 168, glutamate 185, and serine 265. Aspartate 293 contacts Fe cation.

This sequence belongs to the KAE1 / TsaD family. The cofactor is Fe(2+).

It localises to the cytoplasm. It catalyses the reaction L-threonylcarbamoyladenylate + adenosine(37) in tRNA = N(6)-L-threonylcarbamoyladenosine(37) in tRNA + AMP + H(+). Required for the formation of a threonylcarbamoyl group on adenosine at position 37 (t(6)A37) in tRNAs that read codons beginning with adenine. Is probably involved in the transfer of the threonylcarbamoyl moiety of threonylcarbamoyl-AMP (TC-AMP) to the N6 group of A37. The polypeptide is tRNA N6-adenosine threonylcarbamoyltransferase (Pyrobaculum calidifontis (strain DSM 21063 / JCM 11548 / VA1)).